The sequence spans 459 residues: tRNA modification GTPase MnmE (459 aa).

Residues R20, E85, and R124 each contribute to the (6S)-5-formyl-5,6,7,8-tetrahydrofolate site. Residues 221–380 (GLSTVIIGRP…LEEAIQSLFY (160 aa)) form the TrmE-type G domain. N231 is a K(+) binding site. Residues 231–236 (NVGKSS), 250–256 (TDIPGTT), and 275–278 (DTAG) each bind GTP. A Mg(2+)-binding site is contributed by S235. K(+) is bound by residues T250, I252, and T255. T256 serves as a coordination point for Mg(2+). Residue K459 participates in (6S)-5-formyl-5,6,7,8-tetrahydrofolate binding.

Belongs to the TRAFAC class TrmE-Era-EngA-EngB-Septin-like GTPase superfamily. TrmE GTPase family. In terms of assembly, homodimer. Heterotetramer of two MnmE and two MnmG subunits. K(+) serves as cofactor.

The protein resides in the cytoplasm. Its function is as follows. Exhibits a very high intrinsic GTPase hydrolysis rate. Involved in the addition of a carboxymethylaminomethyl (cmnm) group at the wobble position (U34) of certain tRNAs, forming tRNA-cmnm(5)s(2)U34. The sequence is that of tRNA modification GTPase MnmE from Bacillus velezensis (strain DSM 23117 / BGSC 10A6 / LMG 26770 / FZB42) (Bacillus amyloliquefaciens subsp. plantarum).